The sequence spans 305 residues: MELIFLGTSAGVPTRSRNVTAILLHLQHPTQPGVWLFDCGEGTQHQMLNTAFHPGKLERIFISHLHGDHLFGLPGLLCSRSMAGNPHPLTVYGPQGVREFIATTLRLSGSWTDFPLQIEEISAGDILDDGLRKVTAFRLEHPLECYGYRVVEHDKPGALNARALKAAGVTPGPLFQALKAGKTVTLADGRQINGADYLAPAVAGKSVAIFGDTAPCEAALALAQGVDVMVHETTLDASMEEKANARGHSSTRQTATLAREAAVGRLIMTHISSRYDDKGCQRLLAECRAIFPATELAYDFSVFPV.

Residues His-64, His-66, Asp-68, His-69, His-141, Asp-212, and His-270 each contribute to the Zn(2+) site. Asp-68 functions as the Proton acceptor in the catalytic mechanism.

Belongs to the RNase Z family. RNase BN subfamily. As to quaternary structure, homodimer. It depends on Zn(2+) as a cofactor.

Functionally, zinc phosphodiesterase, which has both exoribonuclease and endoribonuclease activities. In Salmonella agona (strain SL483), this protein is Ribonuclease BN.